A 1281-amino-acid chain; its full sequence is Zinc finger transcription factor Trps1 (1281 aa).

The interval Met1–Asn198 is disordered. Lys29 is covalently cross-linked (Glycyl lysine isopeptide (Lys-Gly) (interchain with G-Cter in SUMO2)). A compositionally biased stretch (polar residues) spans Asp40–Ser49. Residues Glu53 to His63 show a composition bias toward basic and acidic residues. Lys76 is covalently cross-linked (Glycyl lysine isopeptide (Lys-Gly) (interchain with G-Cter in SUMO2)). Phosphoserine occurs at positions 90 and 127. Residues Leu148–Glu162 are compositionally biased toward basic and acidic residues. The span at Glu163–Val189 shows a compositional bias: polar residues. 2 positions are modified to phosphoserine: Ser178 and Ser216. The segment at Phe222–His247 adopts a C2H2-type 1; atypical zinc-finger fold. Lys263 participates in a covalent cross-link: Glycyl lysine isopeptide (Lys-Gly) (interchain with G-Cter in SUMO2). The C2H2-type 2; atypical zinc finger occupies Phe333 to His358. Positions Ser365–Leu394 are disordered. The segment covering Asn380–Ser391 has biased composition (polar residues). Residues Lys418, Lys457, Lys474, and Lys488 each participate in a glycyl lysine isopeptide (Lys-Gly) (interchain with G-Cter in SUMO2) cross-link. The disordered stretch occupies residues Gln483–Ser512. Residues Lys488–Ser512 show a composition bias toward basic and acidic residues. Residues His614–His637 form a C2H2-type 3; atypical zinc finger. A mediates interaction with GLI3 region spans residues Ser635–Gly819. Residue Lys645 forms a Glycyl lysine isopeptide (Lys-Gly) (interchain with G-Cter in SUMO2) linkage. C2H2-type zinc fingers lie at residues His666–His689 and Tyr692–His715. Lys737 participates in a covalent cross-link: Glycyl lysine isopeptide (Lys-Gly) (interchain with G-Cter in SUMO2). Phosphothreonine is present on Thr751. Lys755 is covalently cross-linked (Glycyl lysine isopeptide (Lys-Gly) (interchain with G-Cter in SUMO2)). Lys766 is covalently cross-linked (Glycyl lysine isopeptide (Lys-Gly) (interchain with G-Cter in SUMO1); alternate). A Glycyl lysine isopeptide (Lys-Gly) (interchain with G-Cter in SUMO2); alternate cross-link involves residue Lys766. Glycyl lysine isopeptide (Lys-Gly) (interchain with G-Cter in SUMO2) cross-links involve residues Lys825, Lys850, Lys877, and Lys879. Positions Ala856–Arg887 are disordered. The segment at Cys896–Cys920 adopts a GATA-type zinc-finger fold. Glycyl lysine isopeptide (Lys-Gly) (interchain with G-Cter in SUMO2) cross-links involve residues Lys925, Lys937, and Lys965. Residues Glu961–Gly977 show a composition bias toward polar residues. The tract at residues Glu961 to Ser1000 is disordered. Ser978 carries the phosphoserine modification. Over residues Leu980–Glu995 the composition is skewed to basic and acidic residues. Residues Glu985–Lys1184 form a mediates interaction with RNF4 region. Residues Lys1003, Lys1012, Lys1030, and Lys1040 each participate in a glycyl lysine isopeptide (Lys-Gly) (interchain with G-Cter in SUMO2) cross-link. A disordered region spans residues Ile1039–Tyr1080. Residues Lys1040–Pro1049 show a composition bias toward polar residues. Phosphoserine is present on Ser1041. A compositionally biased stretch (low complexity) spans Gly1050–Lys1059. Positions Gly1060 to Met1072 are enriched in basic and acidic residues. Ser1066 bears the Phosphoserine mark. Lys1070 is covalently cross-linked (Glycyl lysine isopeptide (Lys-Gly) (interchain with G-Cter in SUMO2)). Ser1085 bears the Phosphoserine mark. Residues Pro1163–Glu1281 are transcriptional repressor domain. Residues Ile1168–Pro1196 form a disordered region. Glycyl lysine isopeptide (Lys-Gly) (interchain with G-Cter in SUMO2); alternate cross-links involve residues Lys1192 and Lys1201. Glycyl lysine isopeptide (Lys-Gly) (interchain with G-Cter in SUMO); alternate cross-links involve residues Lys1192 and Lys1201. Lys1201 is covalently cross-linked (Glycyl lysine isopeptide (Lys-Gly) (interchain with G-Cter in SUMO1); alternate). 2 consecutive C2H2-type zinc fingers follow at residues Thr1215–His1237 and Phe1243–His1267.

As to quaternary structure, interacts with RNF4; regulates TRPS1 repressor activity. Interacts specifically with the activator form of GLI3 (GLI3A) but not with the repressor form (GLI3R). Sumoylated. Sumoylation in the repressor domain inhibits the transcription repression activity. Sumoylation on Lys-1201 is the major site. Appears to be sumoylated on multiple sites. As to expression, ubiquitously expressed in the adult. Found in fetal brain, lung, kidney, liver, spleen and thymus. More highly expressed in androgen-dependent than in androgen-independent prostate cancer cells.

It localises to the nucleus. Functionally, transcriptional repressor. Binds specifically to GATA sequences and represses expression of GATA-regulated genes at selected sites and stages in vertebrate development. Regulates chondrocyte proliferation and differentiation. Executes multiple functions in proliferating chondrocytes, expanding the region of distal chondrocytes, activating proliferation in columnar cells and supporting the differentiation of columnar into hypertrophic chondrocytes. This is Zinc finger transcription factor Trps1 (TRPS1) from Homo sapiens (Human).